The following is a 228-amino-acid chain: uncharacterized protein (228 aa).

The N-terminal stretch at 1–28 (MRKKRVITCVMAASLTLGSLLPAGYASA) is a signal peptide.

This is an uncharacterized protein from Bacillus subtilis (strain 168).